We begin with the raw amino-acid sequence, 445 residues long: Tubulin beta-2 chain (445 aa).

Glutamine 11, glutamate 69, serine 138, glycine 142, threonine 143, glycine 144, asparagine 204, and asparagine 226 together coordinate GTP. Glutamate 69 provides a ligand contact to Mg(2+). A disordered region spans residues glutamine 424–alanine 445. Positions threonine 429–alanine 445 are enriched in acidic residues.

It belongs to the tubulin family. As to quaternary structure, dimer of alpha and beta chains. A typical microtubule is a hollow water-filled tube with an outer diameter of 25 nm and an inner diameter of 15 nM. Alpha-beta heterodimers associate head-to-tail to form protofilaments running lengthwise along the microtubule wall with the beta-tubulin subunit facing the microtubule plus end conferring a structural polarity. Microtubules usually have 13 protofilaments but different protofilament numbers can be found in some organisms and specialized cells. Mg(2+) serves as cofactor.

It localises to the cytoplasm. It is found in the cytoskeleton. Tubulin is the major constituent of microtubules, a cylinder consisting of laterally associated linear protofilaments composed of alpha- and beta-tubulin heterodimers. Microtubules grow by the addition of GTP-tubulin dimers to the microtubule end, where a stabilizing cap forms. Below the cap, tubulin dimers are in GDP-bound state, owing to GTPase activity of alpha-tubulin. This chain is Tubulin beta-2 chain (TUB-2), found in Echinococcus multilocularis (Fox tapeworm).